A 311-amino-acid polypeptide reads, in one-letter code: Probable deoxyhypusine synthase (311 aa).

The active-site Nucleophile is the Lys-284.

The protein belongs to the deoxyhypusine synthase family. Requires NAD(+) as cofactor.

The catalysed reaction is [eIF5A protein]-L-lysine + spermidine = [eIF5A protein]-deoxyhypusine + propane-1,3-diamine. The protein operates within protein modification; eIF5A hypusination. In terms of biological role, catalyzes the NAD-dependent oxidative cleavage of spermidine and the subsequent transfer of the butylamine moiety of spermidine to the epsilon-amino group of a specific lysine residue of the eIF-5A precursor protein to form the intermediate deoxyhypusine residue. This Sulfolobus acidocaldarius (strain ATCC 33909 / DSM 639 / JCM 8929 / NBRC 15157 / NCIMB 11770) protein is Probable deoxyhypusine synthase.